A 141-amino-acid polypeptide reads, in one-letter code: Hemoglobin subunit alpha-A (141 aa).

The 141-residue stretch at 1 to 141 (VLSANDKTNV…VGNVLSAKYR (141 aa)) folds into the Globin domain. Histidine 58 contacts O2. Histidine 87 contributes to the heme b binding site.

The protein belongs to the globin family. In terms of assembly, heterotetramer of two alpha chains and two beta chains. As to expression, red blood cells.

Functionally, involved in oxygen transport from the lung to the various peripheral tissues. The chain is Hemoglobin subunit alpha-A (HBAA) from Trigonoceps occipitalis (White-headed vulture).